The primary structure comprises 807 residues: Sucrose synthase 1 (807 aa).

The tract at residues 272 to 748 (MMFNVVILSP…GLKRIYEKYT (477 aa)) is GT-B glycosyltransferase.

The protein belongs to the glycosyltransferase 1 family. Plant sucrose synthase subfamily. Forms homotetramers. In endosperm it forms both homotetramers and heterotetramers with SS2, all three possible heterotetramers are formed. As to expression, highly expressed in developing endosperm and in roots and, at lower levels, in coleoptiles and aleurone. In 3 day old roots it is detected in cap cells and along the vascular strand, starting just after the meristemic region. In 9 day old leaves it is found in the phloem. In seeds it is distributed throughout the endosperm and also found in the assimilate-unloading tissues, the nucellar projection, the vascular area and at a high concentration in the chalazal region.

It catalyses the reaction an NDP-alpha-D-glucose + D-fructose = a ribonucleoside 5'-diphosphate + sucrose + H(+). In terms of biological role, sucrose-cleaving enzyme that provides UDP-glucose and fructose for various metabolic pathways. This chain is Sucrose synthase 1 (SS1), found in Hordeum vulgare (Barley).